The chain runs to 156 residues: ATP synthase subunit b (156 aa).

A helical transmembrane segment spans residues 7 to 27 (FFAQMVVFFILWWVVAKFIWP).

It belongs to the ATPase B chain family. F-type ATPases have 2 components, F(1) - the catalytic core - and F(0) - the membrane proton channel. F(1) has five subunits: alpha(3), beta(3), gamma(1), delta(1), epsilon(1). F(0) has three main subunits: a(1), b(2) and c(10-14). The alpha and beta chains form an alternating ring which encloses part of the gamma chain. F(1) is attached to F(0) by a central stalk formed by the gamma and epsilon chains, while a peripheral stalk is formed by the delta and b chains.

It localises to the cell inner membrane. In terms of biological role, f(1)F(0) ATP synthase produces ATP from ADP in the presence of a proton or sodium gradient. F-type ATPases consist of two structural domains, F(1) containing the extramembraneous catalytic core and F(0) containing the membrane proton channel, linked together by a central stalk and a peripheral stalk. During catalysis, ATP synthesis in the catalytic domain of F(1) is coupled via a rotary mechanism of the central stalk subunits to proton translocation. Its function is as follows. Component of the F(0) channel, it forms part of the peripheral stalk, linking F(1) to F(0). The protein is ATP synthase subunit b of Cupriavidus metallidurans (strain ATCC 43123 / DSM 2839 / NBRC 102507 / CH34) (Ralstonia metallidurans).